The primary structure comprises 226 residues: Glutathione S-transferase kappa 1 (226 aa).

Glutathione is bound by residues 15 to 17 (SPY), Asn-53, and 199 to 200 (SD).

The protein belongs to the GST superfamily. Kappa family.

It catalyses the reaction RX + glutathione = an S-substituted glutathione + a halide anion + H(+). This is Glutathione S-transferase kappa 1 (gstk-1) from Caenorhabditis elegans.